The primary structure comprises 444 residues: UDP-N-acetylmuramate--L-alanine ligase (444 aa).

ATP is bound at residue Gly-111–Ser-117.

It belongs to the MurCDEF family.

Its subcellular location is the cytoplasm. It carries out the reaction UDP-N-acetyl-alpha-D-muramate + L-alanine + ATP = UDP-N-acetyl-alpha-D-muramoyl-L-alanine + ADP + phosphate + H(+). It participates in cell wall biogenesis; peptidoglycan biosynthesis. Functionally, cell wall formation. This is UDP-N-acetylmuramate--L-alanine ligase from Leuconostoc mesenteroides subsp. mesenteroides (strain ATCC 8293 / DSM 20343 / BCRC 11652 / CCM 1803 / JCM 6124 / NCDO 523 / NBRC 100496 / NCIMB 8023 / NCTC 12954 / NRRL B-1118 / 37Y).